The chain runs to 332 residues: Decaprenyl-phosphate phosphoribosyltransferase (332 aa).

Positions 1–12 are enriched in basic and acidic residues; sequence MSEHAAEHHRDT. The tract at residues 1–36 is disordered; that stretch reads MSEHAAEHHRDTQNFLTSEPHTTAIEDNKKRQPPKN. 2 consecutive transmembrane segments (helical) span residues 50-70 and 74-94; these read WVKN…AIFN and IIDV…IYLV. 5-phospho-alpha-D-ribose 1-diphosphate is bound by residues lysine 52 and tyrosine 92. Residues asparagine 95 and aspartate 99 each contribute to the Mg(2+) site. Lysine 109 contributes to the 5-phospho-alpha-D-ribose 1-diphosphate binding site. A run of 2 helical transmembrane segments spans residues 114–134 and 146–166; these read IAAG…LIAL and VALA…CFGW. 5-phospho-alpha-D-ribose 1-diphosphate-binding residues include lysine 167 and arginine 184. 2 helical membrane-spanning segments follow: residues 169 to 189 and 190 to 210; these read MPVI…MAGG and VAAG…GSLF. A trans,octa-cis-decaprenyl phosphate-binding site is contributed by lysine 215. Helical transmembrane passes span 244-264, 273-293, and 310-330; these read FVWT…GFDL, PWYQ…AAGV, and VLQV…YIMP.

It belongs to the UbiA prenyltransferase family. DPPR synthase subfamily. Mg(2+) is required as a cofactor.

The protein localises to the cell inner membrane. It carries out the reaction trans,octa-cis-decaprenyl phosphate + 5-phospho-alpha-D-ribose 1-diphosphate + H(+) = trans,octa-cis-decaprenylphospho-beta-D-ribofuranose 5-phosphate + diphosphate. The protein operates within cell wall biogenesis; cell wall polysaccharide biosynthesis. Involved in the biosynthesis of decaprenylphosphoryl arabinose (DPA) a precursor for arabinan synthesis in mycobacterial cell wall biosynthesis. Catalyzes the transfer of a 5-phosphoribosyl residue from phosphoribose diphosphate (PRPP) to decaprenyl phosphate (DP) to form decaprenylphosphoryl-5-phosphoribose (DPPR). This chain is Decaprenyl-phosphate phosphoribosyltransferase, found in Corynebacterium glutamicum (strain ATCC 13032 / DSM 20300 / JCM 1318 / BCRC 11384 / CCUG 27702 / LMG 3730 / NBRC 12168 / NCIMB 10025 / NRRL B-2784 / 534).